We begin with the raw amino-acid sequence, 363 residues long: tRNA/tmRNA (uracil-C(5))-methyltransferase (363 aa).

The S-adenosyl-L-methionine site is built by Gln-187, Tyr-215, Asn-220, Glu-236, and Asp-296. Cys-321 acts as the Nucleophile in catalysis. Glu-355 functions as the Proton acceptor in the catalytic mechanism.

This sequence belongs to the class I-like SAM-binding methyltransferase superfamily. RNA M5U methyltransferase family. TrmA subfamily.

The catalysed reaction is uridine(54) in tRNA + S-adenosyl-L-methionine = 5-methyluridine(54) in tRNA + S-adenosyl-L-homocysteine + H(+). The enzyme catalyses uridine(341) in tmRNA + S-adenosyl-L-methionine = 5-methyluridine(341) in tmRNA + S-adenosyl-L-homocysteine + H(+). Dual-specificity methyltransferase that catalyzes the formation of 5-methyluridine at position 54 (m5U54) in all tRNAs, and that of position 341 (m5U341) in tmRNA (transfer-mRNA). The protein is tRNA/tmRNA (uracil-C(5))-methyltransferase of Haemophilus influenzae (strain 86-028NP).